Reading from the N-terminus, the 100-residue chain is Aspartyl/glutamyl-tRNA(Asn/Gln) amidotransferase subunit C (100 aa).

It belongs to the GatC family. Heterotrimer of A, B and C subunits.

It carries out the reaction L-glutamyl-tRNA(Gln) + L-glutamine + ATP + H2O = L-glutaminyl-tRNA(Gln) + L-glutamate + ADP + phosphate + H(+). The enzyme catalyses L-aspartyl-tRNA(Asn) + L-glutamine + ATP + H2O = L-asparaginyl-tRNA(Asn) + L-glutamate + ADP + phosphate + 2 H(+). Functionally, allows the formation of correctly charged Asn-tRNA(Asn) or Gln-tRNA(Gln) through the transamidation of misacylated Asp-tRNA(Asn) or Glu-tRNA(Gln) in organisms which lack either or both of asparaginyl-tRNA or glutaminyl-tRNA synthetases. The reaction takes place in the presence of glutamine and ATP through an activated phospho-Asp-tRNA(Asn) or phospho-Glu-tRNA(Gln). The chain is Aspartyl/glutamyl-tRNA(Asn/Gln) amidotransferase subunit C from Streptococcus pneumoniae serotype 19F (strain G54).